Reading from the N-terminus, the 327-residue chain is Interleukin-12 subunit beta (327 aa).

An N-terminal signal peptide occupies residues 1-22; it reads MCLQQLVISWVSLVWLASPLLA. The Ig-like C2-type domain maps to 23–106; sequence IWELEKNVYV…LSQMLLLLHK (84 aa). A disulfide bridge links cysteine 50 with cysteine 90. Asparagine 134 and asparagine 152 each carry an N-linked (GlcNAc...) asparagine glycan. The 91-residue stretch at 237 to 327 folds into the Fibronectin type-III domain; that stretch reads PPKNLKMKPS…WSEWATMSCP (91 aa).

It belongs to the IL-12B family. Heterodimer with IL12A; disulfide-linked. The heterodimer is known as interleukin IL-12. Heterodimer with IL23A; disulfide-linked. The heterodimer is known as interleukin IL-23. Also secreted as a monomer. Interacts with NBR1; this interaction promotes IL-12 secretion.

The protein localises to the secreted. Cytokine that can act as a growth factor for activated T and NK cells, enhance the lytic activity of NK/lymphokine-activated killer cells, and stimulate the production of IFN-gamma by resting PBMC. Its function is as follows. Associates with IL23A to form the IL-23 interleukin, a heterodimeric cytokine which functions in innate and adaptive immunity. IL-23 may constitute with IL-17 an acute response to infection in peripheral tissues. IL-23 binds to a heterodimeric receptor complex composed of IL12RB1 and IL23R, activates the Jak-Stat signaling cascade, stimulates memory rather than naive T-cells and promotes production of pro-inflammatory cytokines. IL-23 induces autoimmune inflammation and thus may be responsible for autoimmune inflammatory diseases and may be important for tumorigenesis. The polypeptide is Interleukin-12 subunit beta (IL12B) (Marmota monax (Woodchuck)).